Here is a 450-residue protein sequence, read N- to C-terminus: tRNA modification GTPase MnmE (450 aa).

(6S)-5-formyl-5,6,7,8-tetrahydrofolate is bound by residues arginine 24, glutamate 82, and lysine 121. One can recognise a TrmE-type G domain in the interval 218–375; that stretch reads GMHVVLVGQP…LRQVLLEAVG (158 aa). Asparagine 228 is a K(+) binding site. GTP contacts are provided by residues 228–233, 247–253, 272–275, and 356–358; these read NVGKSS, TDIAGTT, DTAG, and SAR. Residue serine 232 participates in Mg(2+) binding. K(+) is bound by residues threonine 247, isoleucine 249, and threonine 252. Threonine 253 provides a ligand contact to Mg(2+). Residue lysine 450 participates in (6S)-5-formyl-5,6,7,8-tetrahydrofolate binding.

It belongs to the TRAFAC class TrmE-Era-EngA-EngB-Septin-like GTPase superfamily. TrmE GTPase family. As to quaternary structure, homodimer. Heterotetramer of two MnmE and two MnmG subunits. The cofactor is K(+).

Its subcellular location is the cytoplasm. Exhibits a very high intrinsic GTPase hydrolysis rate. Involved in the addition of a carboxymethylaminomethyl (cmnm) group at the wobble position (U34) of certain tRNAs, forming tRNA-cmnm(5)s(2)U34. The chain is tRNA modification GTPase MnmE from Laribacter hongkongensis (strain HLHK9).